Consider the following 287-residue polypeptide: 26S proteasome non-ATPase regulatory subunit 8 (287 aa).

Phosphoserine is present on serine 43. In terms of domain architecture, PCI spans 99–268 (PSFERYMAQL…QQKPEDTTIP (170 aa)). Residue lysine 234 forms a Glycyl lysine isopeptide (Lys-Gly) (interchain with G-Cter in SUMO2) linkage.

Belongs to the proteasome subunit S14 family. In terms of assembly, component of the 19S proteasome regulatory particle complex. The 26S proteasome consists of a 20S core particle (CP) and two 19S regulatory subunits (RP). The regulatory particle is made of a lid composed of 9 subunits including PSMD8, a base containing 6 ATPases and few additional components. Interacts with DDI2. Interacts with TASOR.

Functionally, component of the 26S proteasome, a multiprotein complex involved in the ATP-dependent degradation of ubiquitinated proteins. This complex plays a key role in the maintenance of protein homeostasis by removing misfolded or damaged proteins, which could impair cellular functions, and by removing proteins whose functions are no longer required. Therefore, the proteasome participates in numerous cellular processes, including cell cycle progression, apoptosis, or DNA damage repair. This Bos taurus (Bovine) protein is 26S proteasome non-ATPase regulatory subunit 8 (PSMD8).